Here is a 146-residue protein sequence, read N- to C-terminus: Antirestriction protein KlcA (146 aa).

The protein belongs to the antirestriction protein family.

In terms of biological role, could be involved in overcoming restriction barriers during establishment after conjugative transfer. The polypeptide is Antirestriction protein KlcA (klcA) (Escherichia coli).